We begin with the raw amino-acid sequence, 84 residues long: Beta-mammal Tt1g (84 aa).

An N-terminal signal peptide occupies residues 1 to 20 (MKGMILFISCILLIGIVVEC). An LCN-type CS-alpha/beta domain is found at 21–82 (KEGYLMDHEG…VWERATNRCG (62 aa)). Intrachain disulfides connect C31–C81, C35–C57, C43–C62, and C47–C64. At C81 the chain carries Cysteine amide.

Belongs to the long (4 C-C) scorpion toxin superfamily. Sodium channel inhibitor family. Beta subfamily. As to expression, expressed by the venom gland.

The protein resides in the secreted. Functionally, beta toxins modify sodium channel function in two ways: an excitatory effect (shifting the activation process to more negative potential) and/or a depressant effect (reducing the peak current). At concentration of 500 nM this toxin produces channel opening at more negative potentials in hNav1.2/SCN2A and hNav1.3/SCN3A, which shows the biggest effect. On the other hand the peak current is decreased in hNav1.4/SCN4A and hNav1.5/SCN5A channels, without apparent modification of the activation gate. This toxin is active against mammals. The polypeptide is Beta-mammal Tt1g (Tityus trivittatus (Argentinean scorpion)).